A 311-amino-acid chain; its full sequence is DNA-directed RNA polymerase subunit alpha (311 aa).

The tract at residues 1–228 is alpha N-terminal domain (alpha-NTD); it reads MQYQIERIDH…ELFQPLATVT (228 aa). The interval 239 to 311 is alpha C-terminal domain (alpha-CTD); it reads PSPEAQIPLE…ISIPQSRTSV (73 aa).

The protein belongs to the RNA polymerase alpha chain family. In terms of assembly, in cyanobacteria the RNAP catalytic core is composed of 2 alpha, 1 beta, 1 beta', 1 gamma and 1 omega subunit. When a sigma factor is associated with the core the holoenzyme is formed, which can initiate transcription.

It catalyses the reaction RNA(n) + a ribonucleoside 5'-triphosphate = RNA(n+1) + diphosphate. Its function is as follows. DNA-dependent RNA polymerase catalyzes the transcription of DNA into RNA using the four ribonucleoside triphosphates as substrates. In Prochlorococcus marinus (strain MIT 9312), this protein is DNA-directed RNA polymerase subunit alpha.